The primary structure comprises 68 residues: Cx9C motif-containing protein 4 (68 aa).

Residues 4 to 46 (KDPCQKQACEIQKCLQANSYMESKCQAVIQELRKCCAQYPKGR) enclose the CHCH domain. Short sequence motifs (cx9C motif) lie at residues 7–17 (CQKQACEIQKC) and 28–38 (CQAVIQELRKC). 3 disulfide bridges follow: Cys-7–Cys-38, Cys-17–Cys-28, and Cys-39–Cys-50.

This sequence belongs to the CMC4 family. Expressed in many tissues with a relatively high level in skeletal muscle.

Its subcellular location is the mitochondrion. The polypeptide is Cx9C motif-containing protein 4 (CMC4) (Homo sapiens (Human)).